A 290-amino-acid chain; its full sequence is Protease HtpX (290 aa).

2 helical membrane-spanning segments follow: residues 6–26 (LFLVTNLAVMLVLGVVLNILF) and 36–56 (ISGLLVFCAVFGFGGSFISLL). His143 contributes to the Zn(2+) binding site. The active site involves Glu144. Position 147 (His147) interacts with Zn(2+). 2 helical membrane passes run 158–178 (LIQGVVNTFVMFFARIVAGVI) and 200–220 (ITVFVLEMLFGVLASIIVMWF). Residue Glu225 coordinates Zn(2+).

This sequence belongs to the peptidase M48B family. Zn(2+) is required as a cofactor.

It localises to the cell inner membrane. The sequence is that of Protease HtpX from Aeromonas hydrophila subsp. hydrophila (strain ATCC 7966 / DSM 30187 / BCRC 13018 / CCUG 14551 / JCM 1027 / KCTC 2358 / NCIMB 9240 / NCTC 8049).